The following is a 171-amino-acid chain: Photosystem I assembly protein Ycf3 (171 aa).

3 TPR repeats span residues 33–66 (AFSY…EEDP), 70–103 (SYIL…NSRL), and 118–151 (GTKS…APNN).

It belongs to the Ycf3 family.

Its subcellular location is the plastid. It is found in the chloroplast thylakoid membrane. Functionally, essential for the assembly of the photosystem I (PSI) complex. May act as a chaperone-like factor to guide the assembly of the PSI subunits. This Emiliania huxleyi (Coccolithophore) protein is Photosystem I assembly protein Ycf3.